We begin with the raw amino-acid sequence, 706 residues long: Polyribonucleotide nucleotidyltransferase (706 aa).

The Mg(2+) site is built by Asp-490 and Asp-496. One can recognise a KH domain in the interval Pro-556–Ile-615. In terms of domain architecture, S1 motif spans Gly-625 to Lys-693.

This sequence belongs to the polyribonucleotide nucleotidyltransferase family. Mg(2+) is required as a cofactor.

It is found in the cytoplasm. It carries out the reaction RNA(n+1) + phosphate = RNA(n) + a ribonucleoside 5'-diphosphate. Functionally, involved in mRNA degradation. Catalyzes the phosphorolysis of single-stranded polyribonucleotides processively in the 3'- to 5'-direction. The polypeptide is Polyribonucleotide nucleotidyltransferase (Jannaschia sp. (strain CCS1)).